The sequence spans 528 residues: Zinc finger protein 16-like (528 aa).

Residues 1–28 (MSRKRNHCYMETGASSESQGAFVDSAGP) are disordered. Residues 79 to 106 (IRVLKMELREKSDEIELLKAKLESAEKD) are a coiled coil. Disordered regions lie at residues 159 to 202 (GAAE…TDAE) and 232 to 293 (FKGD…DRME). Basic and acidic residues predominate over residues 232–242 (FKGDSETKCED). A compositionally biased stretch (acidic residues) spans 244–256 (PPMDEEDENEDSE). Basic and acidic residues-rich tracts occupy residues 257 to 270 (EGRGSLRSVSDHFP) and 278 to 293 (GEDRSSPAEDSMDRME). A C2H2-type 1 zinc finger spans residues 303–326 (FICPFCGTLCPDSSFLEEHIKLMH). Low complexity predominate over residues 333-345 (QSTSAGSSSQAEG). The tract at residues 333–359 (QSTSAGSSSQAEGDSGEAGPASRGARE) is disordered. 4 C2H2-type zinc fingers span residues 366-388 (YECGDCGRHFNYLGNLRQHQRIH), 394-416 (FVCPECGERFRHTARLKSHRLSH), 423-445 (FPCPQCGKGFPVLSGLKRHQRVH), and 451-473 (YACPQCGRRFKELGNLYTHMRIH). The segment at 479-501 (YTCYQCGRSFRHLGTYKSHRCMP) adopts a C2H2-type 6; degenerate zinc-finger fold. A disordered region spans residues 502–528 (ATQMPSEHSPPWAQEDKVQTGRLQGYV).

It belongs to the krueppel C2H2-type zinc-finger protein family.

The protein resides in the nucleus. Probable transcription factor. Important for development and migration of oligodendrocyte precursor cells, and normal myelination of axons in the central nervous system (CNS). Functions autonomously in oligodendrocytes to promote CNS myelination. Seems to act in parallel with notch3 during oligodendrocyte development. This is Zinc finger protein 16-like from Danio rerio (Zebrafish).